The chain runs to 533 residues: Probable fucosyltransferase 5 (533 aa).

Residues 1–13 are Cytoplasmic-facing; the sequence is MYQKFQISGKIVK. Residues 14 to 34 form a helical; Signal-anchor for type II membrane protein membrane-spanning segment; that stretch reads TLGLKMKVLIAVSFGSLLFIL. The Lumenal portion of the chain corresponds to 35 to 533; the sequence is SYSNNFNNKL…YGGLKLYDEF (499 aa). Residues N202, N227, N374, N396, and N475 are each glycosylated (N-linked (GlcNAc...) asparagine).

It belongs to the glycosyltransferase 37 family. As to expression, expressed in roots, leaves, flowers and siliques.

The protein resides in the golgi apparatus. It is found in the golgi stack membrane. Its pathway is protein modification; protein glycosylation. Functionally, may be involved in cell wall biosynthesis. May act as a fucosyltransferase. The sequence is that of Probable fucosyltransferase 5 (FUT5) from Arabidopsis thaliana (Mouse-ear cress).